A 433-amino-acid polypeptide reads, in one-letter code: 3-phosphoshikimate 1-carboxyvinyltransferase (433 aa).

3-phosphoshikimate-binding residues include Lys-23, Ser-24, and Arg-28. Lys-23 is a phosphoenolpyruvate binding site. Phosphoenolpyruvate-binding residues include Gly-93 and Arg-121. Ser-167, Gln-169, Asp-318, and Lys-345 together coordinate 3-phosphoshikimate. Residue Gln-169 participates in phosphoenolpyruvate binding. Asp-318 acts as the Proton acceptor in catalysis. Arg-349 and Arg-390 together coordinate phosphoenolpyruvate.

This sequence belongs to the EPSP synthase family. As to quaternary structure, monomer.

Its subcellular location is the cytoplasm. The enzyme catalyses 3-phosphoshikimate + phosphoenolpyruvate = 5-O-(1-carboxyvinyl)-3-phosphoshikimate + phosphate. It participates in metabolic intermediate biosynthesis; chorismate biosynthesis; chorismate from D-erythrose 4-phosphate and phosphoenolpyruvate: step 6/7. Its function is as follows. Catalyzes the transfer of the enolpyruvyl moiety of phosphoenolpyruvate (PEP) to the 5-hydroxyl of shikimate-3-phosphate (S3P) to produce enolpyruvyl shikimate-3-phosphate and inorganic phosphate. The sequence is that of 3-phosphoshikimate 1-carboxyvinyltransferase from Nitratiruptor sp. (strain SB155-2).